The chain runs to 382 residues: Palmitoyltransferase ZDHHC16B (382 aa).

At 1–75 the chain is on the cytoplasmic side; that stretch reads MRSWRWSVSR…IYWLVDNMTR (75 aa). A helical membrane pass occupies residues 76 to 96; that stretch reads WFGVVFVCLVMALTSSVVVIV. Topologically, residues 97 to 107 are lumenal; the sequence is YLCVLPIIFSS. The chain crosses the membrane as a helical span at residues 108–130; that stretch reads YPVYWILWHLCYGHWNLLMVVFH. Residues 131-196 are Cytoplasmic-facing; sequence YYKATTTQPG…NNCVGHFNHR (66 aa). The 51-residue stretch at 153-203 folds into the DHHC domain; that stretch reads TICKKCIVPKPARTHHCSICNRCILKMDHHCPWLNNCVGHFNHRYFFSFCL. C183 serves as the catalytic S-palmitoyl cysteine intermediate. The chain crosses the membrane as a helical span at residues 197 to 217; that stretch reads YFFSFCLFMTMGCVYCSISAK. Over 218-275 the chain is Lumenal; sequence DMFLDAYNAIESGRYKGGASQGEAVPGAGLIYISFQHQSSYQTPPPAFTHQERMVHKS. The helical transmembrane segment at 276–296 threads the bilayer; it reads LVYLWVLTSSVAVALGALTLW. The Cytoplasmic portion of the chain corresponds to 297-382; the sequence is HAILITRGET…PAYKSSTTAI (86 aa).

Belongs to the DHHC palmitoyltransferase family.

The protein resides in the endoplasmic reticulum membrane. The catalysed reaction is L-cysteinyl-[protein] + hexadecanoyl-CoA = S-hexadecanoyl-L-cysteinyl-[protein] + CoA. Palmitoyl acyltransferase that mediates palmitoylation of proteins and is required during embryonic heart development. Involved in the proliferation of neural stem cells by regulating the FGF/ERK pathway. The polypeptide is Palmitoyltransferase ZDHHC16B (Danio rerio (Zebrafish)).